The chain runs to 156 residues: Small ribosomal subunit protein uS7 (156 aa).

This sequence belongs to the universal ribosomal protein uS7 family. Part of the 30S ribosomal subunit. Contacts proteins S9 and S11.

Its function is as follows. One of the primary rRNA binding proteins, it binds directly to 16S rRNA where it nucleates assembly of the head domain of the 30S subunit. Is located at the subunit interface close to the decoding center, probably blocks exit of the E-site tRNA. The polypeptide is Small ribosomal subunit protein uS7 (Rhodopseudomonas palustris (strain BisA53)).